The following is a 201-amino-acid chain: Zinc finger protein 239 (201 aa).

7 consecutive C2H2-type zinc fingers follow at residues 6-28 (YKCD…HSVH), 34-56 (FKCD…KRVH), 62-84 (YACE…QRVH), 90-112 (YKCG…RCTH), 118-140 (YQCY…LRVH), 146-168 (YHCG…QRVH), and 174-196 (YECS…QRVH).

The protein belongs to the krueppel C2H2-type zinc-finger protein family. Preferentially expressed in transformed mouse cells.

It localises to the nucleus. In terms of biological role, may be involved in transcriptional regulation. The chain is Zinc finger protein 239 (Znf239) from Mus musculus (Mouse).